The sequence spans 356 residues: sn-glycerol-3-phosphate import ATP-binding protein UgpC (356 aa).

Positions 4–235 (LKLQAVTKSW…PASRFVASFI (232 aa)) constitute an ABC transporter domain. 37–44 (GPSGCGKS) serves as a coordination point for ATP.

It belongs to the ABC transporter superfamily. sn-glycerol-3-phosphate importer (TC 3.A.1.1.3) family. The complex is composed of two ATP-binding proteins (UgpC), two transmembrane proteins (UgpA and UgpE) and a solute-binding protein (UgpB).

It localises to the cell inner membrane. The enzyme catalyses sn-glycerol 3-phosphate(out) + ATP + H2O = sn-glycerol 3-phosphate(in) + ADP + phosphate + H(+). Part of the ABC transporter complex UgpBAEC involved in sn-glycerol-3-phosphate (G3P) import. Responsible for energy coupling to the transport system. This Salmonella typhimurium (strain LT2 / SGSC1412 / ATCC 700720) protein is sn-glycerol-3-phosphate import ATP-binding protein UgpC.